A 1084-amino-acid polypeptide reads, in one-letter code: Carbamoyl phosphate synthase large chain (1084 aa).

Residues 1-401 (MPRRQDVEKV…ALLKAVRSLE (401 aa)) are carboxyphosphate synthetic domain. ATP-binding residues include Arg-129, Arg-169, Gly-175, Gly-176, Arg-208, Leu-210, Glu-215, Gly-241, Val-242, His-243, Gln-284, and Glu-298. An ATP-grasp 1 domain is found at 133-327 (RALMKEIGEP…IAKVAAKIAV (195 aa)). Mg(2+)-binding residues include Gln-284, Glu-298, and Asn-300. The Mn(2+) site is built by Gln-284, Glu-298, and Asn-300. Positions 402–546 (TGRDGLFHPA…YSCYDEENEA (145 aa)) are oligomerization domain. Residues 547–947 (VSPPGRKAVV…ALYKALLASG (401 aa)) form a carbamoyl phosphate synthetic domain region. Residues 672 to 862 (DQLLSDLSIP…LAKVATQVIA (191 aa)) enclose the ATP-grasp 2 domain. ATP contacts are provided by Arg-708, Arg-747, Glu-753, Gly-778, Val-779, His-780, Ser-781, Gln-821, and Glu-833. Positions 821, 833, and 835 each coordinate Mg(2+). Residues Gln-821, Glu-833, and Asn-835 each contribute to the Mn(2+) site. Residues 948 to 1084 (VRVPHRGTVL…VGISAVQDWV (137 aa)) form the MGS-like domain. The tract at residues 948-1084 (VRVPHRGTVL…VGISAVQDWV (137 aa)) is allosteric domain.

This sequence belongs to the CarB family. Composed of two chains; the small (or glutamine) chain promotes the hydrolysis of glutamine to ammonia, which is used by the large (or ammonia) chain to synthesize carbamoyl phosphate. Tetramer of heterodimers (alpha,beta)4. The cofactor is Mg(2+). Mn(2+) serves as cofactor.

It carries out the reaction hydrogencarbonate + L-glutamine + 2 ATP + H2O = carbamoyl phosphate + L-glutamate + 2 ADP + phosphate + 2 H(+). It catalyses the reaction hydrogencarbonate + NH4(+) + 2 ATP = carbamoyl phosphate + 2 ADP + phosphate + 2 H(+). The protein operates within amino-acid biosynthesis; L-arginine biosynthesis; carbamoyl phosphate from bicarbonate: step 1/1. Its pathway is pyrimidine metabolism; UMP biosynthesis via de novo pathway; (S)-dihydroorotate from bicarbonate: step 1/3. Large subunit of the glutamine-dependent carbamoyl phosphate synthetase (CPSase). CPSase catalyzes the formation of carbamoyl phosphate from the ammonia moiety of glutamine, carbonate, and phosphate donated by ATP, constituting the first step of 2 biosynthetic pathways, one leading to arginine and/or urea and the other to pyrimidine nucleotides. The large subunit (synthetase) binds the substrates ammonia (free or transferred from glutamine from the small subunit), hydrogencarbonate and ATP and carries out an ATP-coupled ligase reaction, activating hydrogencarbonate by forming carboxy phosphate which reacts with ammonia to form carbamoyl phosphate. This is Carbamoyl phosphate synthase large chain from Symbiobacterium thermophilum (strain DSM 24528 / JCM 14929 / IAM 14863 / T).